A 261-amino-acid chain; its full sequence is Glucosamine-6-phosphate deaminase (261 aa).

The Proton acceptor; for enolization step role is filled by D67. The active-site For ring-opening step is the N136. Residue H138 is the Proton acceptor; for ring-opening step of the active site. Catalysis depends on E143, which acts as the For ring-opening step.

The protein belongs to the glucosamine/galactosamine-6-phosphate isomerase family. NagB subfamily.

The enzyme catalyses alpha-D-glucosamine 6-phosphate + H2O = beta-D-fructose 6-phosphate + NH4(+). The protein operates within amino-sugar metabolism; N-acetylneuraminate degradation; D-fructose 6-phosphate from N-acetylneuraminate: step 5/5. Catalyzes the reversible isomerization-deamination of glucosamine 6-phosphate (GlcN6P) to form fructose 6-phosphate (Fru6P) and ammonium ion. This is Glucosamine-6-phosphate deaminase from Cutibacterium acnes (strain DSM 16379 / KPA171202) (Propionibacterium acnes).